The following is a 474-amino-acid chain: L-arabinose isomerase 2 (474 aa).

Residues Glu-306, Glu-331, His-348, and His-447 each contribute to the Mn(2+) site.

It belongs to the arabinose isomerase family. Mn(2+) serves as cofactor.

It catalyses the reaction beta-L-arabinopyranose = L-ribulose. It participates in carbohydrate degradation; L-arabinose degradation via L-ribulose; D-xylulose 5-phosphate from L-arabinose (bacterial route): step 1/3. In terms of biological role, catalyzes the conversion of L-arabinose to L-ribulose. This chain is L-arabinose isomerase 2, found in Bacillus licheniformis (strain ATCC 14580 / DSM 13 / JCM 2505 / CCUG 7422 / NBRC 12200 / NCIMB 9375 / NCTC 10341 / NRRL NRS-1264 / Gibson 46).